Reading from the N-terminus, the 467-residue chain is Ran-binding protein M homolog (467 aa).

Positions 1 to 25 (MNSSPPPANSANGDTTNNGENGQDL) are disordered. Polar residues predominate over residues 9-25 (NSANGDTTNNGENGQDL). The B30.2/SPRY domain occupies 31-219 (DKIRLSAKRD…VLVNFGKKKF (189 aa)). Positions 244 to 276 (PPNIGYGLVKTYLLHYGYEETLDAFNLATKNTV) constitute a LisH domain. The CTLH domain occupies 295–353 (ALKQRKNLRQLVRNGEIDTALAELQKLYPQIVQDDKSVVCFLLHCQKFIELVRVGKLEE).

Belongs to the RANBP9/10 family. Interacts with WDR36, WDS, GID8, MAEA and RMD5.

It localises to the cytoplasm. Its subcellular location is the nucleus. The protein localises to the perinuclear region. The chain is Ran-binding protein M homolog from Arabidopsis thaliana (Mouse-ear cress).